We begin with the raw amino-acid sequence, 29 residues long: Dermaseptin-H7 (29 aa).

Position 29 is a leucine amide (L29).

The protein belongs to the frog skin active peptide (FSAP) family. Dermaseptin subfamily. Expressed by the skin glands.

The protein localises to the secreted. Functionally, has antibacterial activity against the Gram-negative bacterium E.coli and the Gram-positive bacterium S.aureus. Has antiprotozoal activity against L.amazonensis. Has antifungal activity. Has no hemolytic activity. This chain is Dermaseptin-H7, found in Pithecopus hypochondrialis (Orange-legged leaf frog).